The chain runs to 434 residues: Enolase (434 aa).

Glutamine 163 serves as a coordination point for (2R)-2-phosphoglycerate. The active-site Proton donor is glutamate 205. Residues aspartate 242, glutamate 291, and aspartate 318 each coordinate Mg(2+). Positions 343, 372, 373, and 394 each coordinate (2R)-2-phosphoglycerate. The Proton acceptor role is filled by lysine 343.

This sequence belongs to the enolase family. Mg(2+) is required as a cofactor.

It is found in the cytoplasm. It localises to the secreted. The protein localises to the cell surface. It carries out the reaction (2R)-2-phosphoglycerate = phosphoenolpyruvate + H2O. The protein operates within carbohydrate degradation; glycolysis; pyruvate from D-glyceraldehyde 3-phosphate: step 4/5. Catalyzes the reversible conversion of 2-phosphoglycerate (2-PG) into phosphoenolpyruvate (PEP). It is essential for the degradation of carbohydrates via glycolysis. The chain is Enolase from Streptococcus thermophilus (strain ATCC BAA-491 / LMD-9).